The sequence spans 153 residues: 6,7-dimethyl-8-ribityllumazine synthase (153 aa).

Residues F21, A55–E57, and T79–I81 each bind 5-amino-6-(D-ribitylamino)uracil. A84 to T85 provides a ligand contact to (2S)-2-hydroxy-3-oxobutyl phosphate. Residue H87 is the Proton donor of the active site. F112 serves as a coordination point for 5-amino-6-(D-ribitylamino)uracil. Residue R126 participates in (2S)-2-hydroxy-3-oxobutyl phosphate binding.

Belongs to the DMRL synthase family. In terms of assembly, forms an icosahedral capsid composed of 60 subunits, arranged as a dodecamer of pentamers.

The catalysed reaction is (2S)-2-hydroxy-3-oxobutyl phosphate + 5-amino-6-(D-ribitylamino)uracil = 6,7-dimethyl-8-(1-D-ribityl)lumazine + phosphate + 2 H2O + H(+). Its pathway is cofactor biosynthesis; riboflavin biosynthesis; riboflavin from 2-hydroxy-3-oxobutyl phosphate and 5-amino-6-(D-ribitylamino)uracil: step 1/2. Catalyzes the formation of 6,7-dimethyl-8-ribityllumazine by condensation of 5-amino-6-(D-ribitylamino)uracil with 3,4-dihydroxy-2-butanone 4-phosphate. This is the penultimate step in the biosynthesis of riboflavin. The protein is 6,7-dimethyl-8-ribityllumazine synthase of Bacillus cereus (strain B4264).